The primary structure comprises 505 residues: Structural protein 27 (505 aa).

Hydrophobic regions lie at residues 20–40 (VSLICFLLVFSVTVPFVFSPV), 423–443 (MKGIGSDIQWLLFTVIIMSTI), and 470–490 (IGLGLLLSMVFFGIFIGLILV).

The protein localises to the virion. The polypeptide is Structural protein 27 (His1 virus (isolate Australia/Victoria) (His1V)).